Reading from the N-terminus, the 320-residue chain is Cytochrome f (320 aa).

Residues 1-35 (MQTRNTFSWIKEQITRSISASLMIYIITRTSISNA) form the signal peptide. Heme is bound by residues Y36, C56, C59, and H60. Residues 286–306 (VQGLLFFFAAVILAQIFLVLK) traverse the membrane as a helical segment.

Belongs to the cytochrome f family. As to quaternary structure, the 4 large subunits of the cytochrome b6-f complex are cytochrome b6, subunit IV (17 kDa polypeptide, petD), cytochrome f and the Rieske protein, while the 4 small subunits are PetG, PetL, PetM and PetN. The complex functions as a dimer. Heme is required as a cofactor.

It is found in the plastid. It localises to the chloroplast thylakoid membrane. Its function is as follows. Component of the cytochrome b6-f complex, which mediates electron transfer between photosystem II (PSII) and photosystem I (PSI), cyclic electron flow around PSI, and state transitions. This chain is Cytochrome f, found in Helianthus annuus (Common sunflower).